Reading from the N-terminus, the 610-residue chain is Chaperone protein DnaK (610 aa).

Thr173 is modified (phosphothreonine; by autocatalysis). Disordered stretches follow at residues 525–544 and 576–610; these read ENIGEEDKKSAEEKKDALKT and AAQQQQQAQGANAGQNNDSTVEDAEFKEVKDDDKK. The span at 529-542 shows a compositional bias: basic and acidic residues; it reads EEDKKSAEEKKDAL. Low complexity predominate over residues 576-592; the sequence is AAQQQQQAQGANAGQNN. The segment covering 599–610 has biased composition (basic and acidic residues); it reads AEFKEVKDDDKK.

It belongs to the heat shock protein 70 family.

In terms of biological role, acts as a chaperone. This chain is Chaperone protein DnaK, found in Staphylococcus aureus (strain Mu3 / ATCC 700698).